A 159-amino-acid polypeptide reads, in one-letter code: uncharacterized protein (159 aa).

Residues 9-36 are disordered; that stretch reads VTSGNKEKKKKRSSAGLTGHAPPAADSS.

This is an uncharacterized protein from Caenorhabditis elegans.